The primary structure comprises 393 residues: Dual specificity mitogen-activated protein kinase kinase 1 (393 aa).

Residues 1–27 (MPKKKPTPIQLNPAPDGSAVNGTSSAE) form a disordered region. Positions 68-361 (FEKISELGAG…LKQLMVHAFI (294 aa)) constitute a Protein kinase domain. Residues 74–82 (LGAGNGGVV) and Lys97 contribute to the ATP site. The active-site Proton acceptor is the Asp190. A phosphoserine; by RAF mark is found at Ser218 and Ser222. The tract at residues 270–307 (ELELMFGCQVEGDAAETPPRPRTPGRPLSSYGMDSRPP) is RAF1-binding. Thr286 carries the phosphothreonine modification. Thr292 carries the phosphothreonine; by MAPK1 modification. Ser298 carries the phosphoserine; by PAK modification.

It belongs to the protein kinase superfamily. STE Ser/Thr protein kinase family. MAP kinase kinase subfamily. In terms of assembly, found in a complex with at least BRAF, HRAS, MAP2K1, MAPK3/ERK1 and RGS14. Forms a heterodimer with MAP2K2/MEK2. Forms heterodimers with KSR2 which further dimerize to form tetramers. Interacts with KSR1 or KSR2 and BRAF; the interaction with KSR1 or KSR2 mediates KSR1-BRAF or KSR2-BRAF dimerization. Interacts with ARBB2, LAMTOR3, MAPK1/ERK2 and RAF1. Interacts with MAPK1/ERK2. Interacts with MORG1. Interacts with PPARG. Interacts with SGK1. Interacts with BIRC6/bruce. Interacts with KAT7; the interaction promotes KAT7 phosphorylation. Interacts with RAF1 and NEK10; the interaction is required for ERK1/2-signaling pathway activation in response to UV irradiation. Interacts with TRAF3IP3. Interacts with MOS. In terms of processing, phosphorylation at Ser-218 and Ser-222 by MAP kinase kinase kinases (RAF or MEKK1) positively regulates the kinase activity. Also phosphorylated at Thr-292 by MAPK1/ERK2 and at Ser-298 by PAK. MAPK1/ERK2 phosphorylation of Thr-292 occurs in response to cellular adhesion and leads to inhibition of Ser-298 phosphorylation by PAK. Autophosphorylated at Ser-218 and Ser-222, autophosphosphorylation is promoted by NEK10 following UV irradiation.

It is found in the cytoplasm. Its subcellular location is the cytoskeleton. The protein resides in the microtubule organizing center. It localises to the centrosome. The protein localises to the spindle pole body. It is found in the nucleus. Its subcellular location is the membrane. The enzyme catalyses L-seryl-[protein] + ATP = O-phospho-L-seryl-[protein] + ADP + H(+). It carries out the reaction L-threonyl-[protein] + ATP = O-phospho-L-threonyl-[protein] + ADP + H(+). It catalyses the reaction L-tyrosyl-[protein] + ATP = O-phospho-L-tyrosyl-[protein] + ADP + H(+). Its activity is regulated as follows. Ras proteins such as HRAS mediate the activation of RAF proteins such as RAF1 or BRAF which in turn activate extracellular signal-regulated kinases (ERK) through MAPK (mitogen-activated protein kinases) and ERK kinases MAP2K1/MEK1 and MAP2K2/MEK2. Activation occurs through phosphorylation of Ser-218 and Ser-222. MAP2K1/MEK1 binds KSR1 or KSR2 releasing the inhibitory intramolecular interaction between KSR1 or KSR2 protein kinase and N-terminal domains. This allows KSR1 or KSR2 dimerization with BRAF leading to BRAF activation and phosphorylation of MAP2K1. MAP2K1/MEK1 is also the target of negative feed-back regulation by its substrate kinases, such as MAPK1/ERK2. These phosphorylate MAP2K1/MEK1 on Thr-292, thereby facilitating dephosphorylation of the activating residues Ser-218 and Ser-222. Inhibited by serine/threonine phosphatase 2A. Functionally, dual specificity protein kinase which acts as an essential component of the MAP kinase signal transduction pathway. Binding of extracellular ligands such as growth factors, cytokines and hormones to their cell-surface receptors activates RAS and this initiates RAF1 activation. RAF1 then further activates the dual-specificity protein kinases MAP2K1/MEK1 and MAP2K2/MEK2. Both MAP2K1/MEK1 and MAP2K2/MEK2 function specifically in the MAPK/ERK cascade, and catalyze the concomitant phosphorylation of a threonine and a tyrosine residue in a Thr-Glu-Tyr sequence located in the extracellular signal-regulated kinases MAPK3/ERK1 and MAPK1/ERK2, leading to their activation and further transduction of the signal within the MAPK/ERK cascade. Activates BRAF in a KSR1 or KSR2-dependent manner; by binding to KSR1 or KSR2 releases the inhibitory intramolecular interaction between KSR1 or KSR2 protein kinase and N-terminal domains which promotes KSR1 or KSR2-BRAF dimerization and BRAF activation. Depending on the cellular context, this pathway mediates diverse biological functions such as cell growth, adhesion, survival and differentiation, predominantly through the regulation of transcription, metabolism and cytoskeletal rearrangements. One target of the MAPK/ERK cascade is peroxisome proliferator-activated receptor gamma (PPARG), a nuclear receptor that promotes differentiation and apoptosis. MAP2K1/MEK1 has been shown to export PPARG from the nucleus. The MAPK/ERK cascade is also involved in the regulation of endosomal dynamics, including lysosome processing and endosome cycling through the perinuclear recycling compartment (PNRC), as well as in the fragmentation of the Golgi apparatus during mitosis. This chain is Dual specificity mitogen-activated protein kinase kinase 1 (MAP2K1), found in Oryctolagus cuniculus (Rabbit).